Reading from the N-terminus, the 183-residue chain is tRNA-splicing endonuclease (183 aa).

Residues Tyr120, His128, and Lys159 contribute to the active site.

It belongs to the tRNA-intron endonuclease family. Archaeal short subfamily. In terms of assembly, homotetramer; although the tetramer contains four active sites, only two participate in the cleavage. Therefore, it should be considered as a dimer of dimers.

The catalysed reaction is pretRNA = a 3'-half-tRNA molecule with a 5'-OH end + a 5'-half-tRNA molecule with a 2',3'-cyclic phosphate end + an intron with a 2',3'-cyclic phosphate and a 5'-hydroxyl terminus.. Functionally, endonuclease that removes tRNA introns. Cleaves pre-tRNA at the 5'- and 3'-splice sites to release the intron. The products are an intron and two tRNA half-molecules bearing 2',3' cyclic phosphate and 5'-OH termini. Recognizes a pseudosymmetric substrate in which 2 bulged loops of 3 bases are separated by a stem of 4 bp. In Pyrobaculum islandicum (strain DSM 4184 / JCM 9189 / GEO3), this protein is tRNA-splicing endonuclease.